The chain runs to 591 residues: V-type ATP synthase alpha chain (591 aa).

ATP is bound at residue 232–239; that stretch reads GPFGAGKT.

This sequence belongs to the ATPase alpha/beta chains family.

It carries out the reaction ATP + H2O + 4 H(+)(in) = ADP + phosphate + 5 H(+)(out). Produces ATP from ADP in the presence of a proton gradient across the membrane. The V-type alpha chain is a catalytic subunit. The polypeptide is V-type ATP synthase alpha chain (Clostridium perfringens (strain SM101 / Type A)).